The primary structure comprises 1407 residues: DNA-directed RNA polymerase subunit beta' (1407 aa).

Zn(2+) is bound by residues Cys70, Cys72, Cys85, and Cys88. Mg(2+) contacts are provided by Asp460, Asp462, and Asp464. Residues Cys814, Cys888, Cys895, and Cys898 each coordinate Zn(2+). At Lys972 the chain carries N6-acetyllysine.

Belongs to the RNA polymerase beta' chain family. The RNAP catalytic core consists of 2 alpha, 1 beta, 1 beta' and 1 omega subunit. When a sigma factor is associated with the core the holoenzyme is formed, which can initiate transcription. Mg(2+) is required as a cofactor. Requires Zn(2+) as cofactor.

The enzyme catalyses RNA(n) + a ribonucleoside 5'-triphosphate = RNA(n+1) + diphosphate. DNA-dependent RNA polymerase catalyzes the transcription of DNA into RNA using the four ribonucleoside triphosphates as substrates. The sequence is that of DNA-directed RNA polymerase subunit beta' from Shigella boydii serotype 18 (strain CDC 3083-94 / BS512).